Here is a 946-residue protein sequence, read N- to C-terminus: Bifunctional glutamine synthetase adenylyltransferase/adenylyl-removing enzyme (946 aa).

An adenylyl removase region spans residues 1-440 (MKPLSSPLQQ…VFNELIGDDE (440 aa)). The segment at 449 to 946 (SEQWRELWQD…VSWQKWLVEE (498 aa)) is adenylyl transferase.

This sequence belongs to the GlnE family. It depends on Mg(2+) as a cofactor.

The catalysed reaction is [glutamine synthetase]-O(4)-(5'-adenylyl)-L-tyrosine + phosphate = [glutamine synthetase]-L-tyrosine + ADP. It catalyses the reaction [glutamine synthetase]-L-tyrosine + ATP = [glutamine synthetase]-O(4)-(5'-adenylyl)-L-tyrosine + diphosphate. Functionally, involved in the regulation of glutamine synthetase GlnA, a key enzyme in the process to assimilate ammonia. When cellular nitrogen levels are high, the C-terminal adenylyl transferase (AT) inactivates GlnA by covalent transfer of an adenylyl group from ATP to specific tyrosine residue of GlnA, thus reducing its activity. Conversely, when nitrogen levels are low, the N-terminal adenylyl removase (AR) activates GlnA by removing the adenylyl group by phosphorolysis, increasing its activity. The regulatory region of GlnE binds the signal transduction protein PII (GlnB) which indicates the nitrogen status of the cell. The polypeptide is Bifunctional glutamine synthetase adenylyltransferase/adenylyl-removing enzyme (Escherichia coli (strain SMS-3-5 / SECEC)).